A 389-amino-acid chain; its full sequence is Tryptophan synthase beta chain 1 (389 aa).

Lysine 84 is subject to N6-(pyridoxal phosphate)lysine.

The protein belongs to the TrpB family. As to quaternary structure, tetramer of two alpha and two beta chains. Pyridoxal 5'-phosphate serves as cofactor.

It is found in the plastid. It localises to the chloroplast. It carries out the reaction (1S,2R)-1-C-(indol-3-yl)glycerol 3-phosphate + L-serine = D-glyceraldehyde 3-phosphate + L-tryptophan + H2O. Its pathway is amino-acid biosynthesis; L-tryptophan biosynthesis; L-tryptophan from chorismate: step 5/5. Functionally, the beta subunit is responsible for the synthesis of L-tryptophan from indole and L-serine. The chain is Tryptophan synthase beta chain 1 (TSB1) from Zea mays (Maize).